We begin with the raw amino-acid sequence, 775 residues long: Polyribonucleotide nucleotidyltransferase (775 aa).

A disordered region spans residues 223-247 (DEQVPEKPRKGRRRGRKSSPRKKTD). Basic residues predominate over residues 231-243 (RKGRRRGRKSSPR). Residues D567 and D573 each contribute to the Mg(2+) site. A KH domain is found at 633 to 692 (PRITTISVPVSKIGEVIGPKGKNINQITEDTGARVSIEDDGTVFISATSGGSAEAAVDRI). Residues 704-773 (GERFLGTVVK…NRGKISLVPV (70 aa)) enclose the S1 motif domain.

The protein belongs to the polyribonucleotide nucleotidyltransferase family. It depends on Mg(2+) as a cofactor.

The protein localises to the cytoplasm. The catalysed reaction is RNA(n+1) + phosphate = RNA(n) + a ribonucleoside 5'-diphosphate. Its function is as follows. Involved in mRNA degradation. Catalyzes the phosphorolysis of single-stranded polyribonucleotides processively in the 3'- to 5'-direction. The polypeptide is Polyribonucleotide nucleotidyltransferase (Corynebacterium kroppenstedtii (strain DSM 44385 / JCM 11950 / CIP 105744 / CCUG 35717)).